The following is a 59-amino-acid chain: Large ribosomal subunit protein bL32 (59 aa).

The disordered stretch occupies residues 1–25 (MAVQQNKKSPSKRGMHRSHDFLNAA).

Belongs to the bacterial ribosomal protein bL32 family.

In Paraburkholderia phymatum (strain DSM 17167 / CIP 108236 / LMG 21445 / STM815) (Burkholderia phymatum), this protein is Large ribosomal subunit protein bL32.